Here is a 425-residue protein sequence, read N- to C-terminus: Sucrose-phosphatase 2 (425 aa).

The protein belongs to the sucrose phosphatase family. As to quaternary structure, homodimer. Mg(2+) is required as a cofactor.

It catalyses the reaction sucrose 6(F)-phosphate + H2O = sucrose + phosphate. Its pathway is glycan biosynthesis; sucrose biosynthesis; sucrose from D-fructose 6-phosphate and UDP-alpha-D-glucose: step 2/2. Inhibited by EDTA. Its function is as follows. Catalyzes the final step of sucrose synthesis. In Nicotiana tabacum (Common tobacco), this protein is Sucrose-phosphatase 2 (SPP2).